Reading from the N-terminus, the 932-residue chain is Isoleucine--tRNA ligase (932 aa).

The short motif at 57-67 is the 'HIGH' region element; the sequence is PYANGDIHIGT. L-isoleucyl-5'-AMP is bound at residue Glu-559. The 'KMSKS' region motif lies at 600-604; the sequence is KMSKS. Lys-603 provides a ligand contact to ATP. Positions 899, 902, 919, and 922 each coordinate Zn(2+).

This sequence belongs to the class-I aminoacyl-tRNA synthetase family. IleS type 1 subfamily. As to quaternary structure, monomer. It depends on Zn(2+) as a cofactor.

The protein localises to the cytoplasm. It catalyses the reaction tRNA(Ile) + L-isoleucine + ATP = L-isoleucyl-tRNA(Ile) + AMP + diphosphate. Its function is as follows. Catalyzes the attachment of isoleucine to tRNA(Ile). As IleRS can inadvertently accommodate and process structurally similar amino acids such as valine, to avoid such errors it has two additional distinct tRNA(Ile)-dependent editing activities. One activity is designated as 'pretransfer' editing and involves the hydrolysis of activated Val-AMP. The other activity is designated 'posttransfer' editing and involves deacylation of mischarged Val-tRNA(Ile). The protein is Isoleucine--tRNA ligase of Thermoanaerobacter pseudethanolicus (strain ATCC 33223 / 39E) (Clostridium thermohydrosulfuricum).